A 492-amino-acid chain; its full sequence is UPF0236 protein TTE0402 (492 aa).

The protein belongs to the UPF0236 family.

The polypeptide is UPF0236 protein TTE0402 (Caldanaerobacter subterraneus subsp. tengcongensis (strain DSM 15242 / JCM 11007 / NBRC 100824 / MB4) (Thermoanaerobacter tengcongensis)).